Consider the following 360-residue polypeptide: Phospho-N-acetylmuramoyl-pentapeptide-transferase (360 aa).

Helical transmembrane passes span 21–41 (YVTF…LWWG), 74–94 (MGGI…GDLG), 97–117 (YVWV…IDDY), 134–154 (YILQ…SADM), 168–188 (IMPQ…VGSS), 199–219 (GLAI…AYLS), 236–256 (AGEL…FLWF), 263–283 (VFMG…IAVL), 288–308 (ILLV…ILQV), and 338–358 (VIVR…ATLK).

Belongs to the glycosyltransferase 4 family. MraY subfamily. Requires Mg(2+) as cofactor.

It is found in the cell inner membrane. It carries out the reaction UDP-N-acetyl-alpha-D-muramoyl-L-alanyl-gamma-D-glutamyl-meso-2,6-diaminopimeloyl-D-alanyl-D-alanine + di-trans,octa-cis-undecaprenyl phosphate = di-trans,octa-cis-undecaprenyl diphospho-N-acetyl-alpha-D-muramoyl-L-alanyl-D-glutamyl-meso-2,6-diaminopimeloyl-D-alanyl-D-alanine + UMP. Its pathway is cell wall biogenesis; peptidoglycan biosynthesis. Catalyzes the initial step of the lipid cycle reactions in the biosynthesis of the cell wall peptidoglycan: transfers peptidoglycan precursor phospho-MurNAc-pentapeptide from UDP-MurNAc-pentapeptide onto the lipid carrier undecaprenyl phosphate, yielding undecaprenyl-pyrophosphoryl-MurNAc-pentapeptide, known as lipid I. In Shewanella woodyi (strain ATCC 51908 / MS32), this protein is Phospho-N-acetylmuramoyl-pentapeptide-transferase.